The primary structure comprises 232 residues: Glutathione S-transferase E14 (232 aa).

A GST N-terminal domain is found at 4 to 85; sequence PKPILYYDER…HLAEKFDEGG (82 aa). One can recognise a GST C-terminal domain in the interval 91–218; sequence EHAERMKVLN…RQTMESVGSF (128 aa).

It belongs to the GST superfamily. Epsilon family. As to expression, expressed in the adult ovary (at protein level).

The catalysed reaction is RX + glutathione = an S-substituted glutathione + a halide anion + H(+). Its function is as follows. Conjugation of reduced glutathione to a wide number of exogenous and endogenous hydrophobic electrophiles. Essential for ecdysteroid biosynthesis. May be involved in detoxification. In Drosophila melanogaster (Fruit fly), this protein is Glutathione S-transferase E14.